The primary structure comprises 276 residues: 3beta-hydroxysteroid dehydrogenase (276 aa).

Residues 70 to 71, asparagine 97, tyrosine 162, and lysine 166 each bind NADP(+); that span reads DV. Tyrosine 162 functions as the Proton acceptor in the catalytic mechanism.

Belongs to the short-chain dehydrogenases/reductases (SDR) family.

It carries out the reaction 3-oxo-5beta-cholan-24-oate + NADPH + H(+) = isolithocholate + NADP(+). The enzyme catalyses 12alpha-hydroxy-3-oxo-5beta-cholan-24-oate + NADPH + H(+) = isodeoxycholate + NADP(+). It catalyses the reaction 12alpha-hydroxy-3-oxo-5beta-cholan-24-oate + NADH + H(+) = isodeoxycholate + NAD(+). The catalysed reaction is 7alpha,12alpha-dihydroxy-3-oxo-5beta-cholan-24-oate + NADPH + H(+) = isocholate + NADP(+). It carries out the reaction 3-oxochenodeoxycholate + NADPH + H(+) = isochenodeoxycholate + NADP(+). In terms of biological role, involved in the modification of secondary bile acids into iso-bile acids (3beta-bile acids) via epimerization of the 3-OH group through a 3-oxo-intermediate. Catalyzes the reduction of 12-alpha-hydroxy-3-oxo-5-beta-cholan-24-oate (3-oxo-DCA) and 3-oxo-5-beta-cholan-24-oate (3-oxo-LCA) to yield isodeoxycholate (isoDCA) and isolithocholate (isoLCA), respectively. Is also able to catalyze the reduction of 3-dehydrocholate (3-oxo-CA or 7alpha,12alpha-dihydroxy-3-oxo-5beta-cholan-24-oate) and 7-alpha-hydroxy-3-oxo-5-beta-cholan-24-oate (3-oxo-CDCA), into isocholate (isoCA) and isochenodeoxycholate (isoCDCA), respectively. Accepts both NADPH and NADH as cosubstrates. The conversion of the abundant bile acid deoxycholate (DCA) into isoDCA by the gut bacterium R.gnavus favors the growth of the keystone commensal genus Bacteroides, since isoDCA is less cytotoxic than its parent compound, DCA; iso-bile acids have thus a potential role in modulating gut community composition. This chain is 3beta-hydroxysteroid dehydrogenase, found in Mediterraneibacter gnavus (strain ATCC 29149 / DSM 114966 / JCM 6515 / VPI C7-9) (Ruminococcus gnavus).